Here is a 426-residue protein sequence, read N- to C-terminus: Serine--tRNA ligase (426 aa).

231 to 233 (TAE) is an L-serine binding site. ATP is bound by residues 262–264 (RRE) and valine 278. Position 285 (glutamate 285) interacts with L-serine. An ATP-binding site is contributed by 349–352 (EVSS). Serine 384 lines the L-serine pocket.

Belongs to the class-II aminoacyl-tRNA synthetase family. Type-1 seryl-tRNA synthetase subfamily. Homodimer. The tRNA molecule binds across the dimer.

It is found in the cytoplasm. It carries out the reaction tRNA(Ser) + L-serine + ATP = L-seryl-tRNA(Ser) + AMP + diphosphate + H(+). The enzyme catalyses tRNA(Sec) + L-serine + ATP = L-seryl-tRNA(Sec) + AMP + diphosphate + H(+). Its pathway is aminoacyl-tRNA biosynthesis; selenocysteinyl-tRNA(Sec) biosynthesis; L-seryl-tRNA(Sec) from L-serine and tRNA(Sec): step 1/1. Catalyzes the attachment of serine to tRNA(Ser). Is also able to aminoacylate tRNA(Sec) with serine, to form the misacylated tRNA L-seryl-tRNA(Sec), which will be further converted into selenocysteinyl-tRNA(Sec). In Chlamydia caviae (strain ATCC VR-813 / DSM 19441 / 03DC25 / GPIC) (Chlamydophila caviae), this protein is Serine--tRNA ligase.